Reading from the N-terminus, the 399-residue chain is Stomatin-like protein 1 (399 aa).

The short motif at glycine 6–leucine 10 is the Tyrosine-type lysosomal sorting signal element. Serine 28 is subject to Phosphoserine. Residues leucine 58–alanine 78 traverse the membrane as a helical; Signal-anchor for type III membrane protein segment. Topologically, residues leucine 79 to lysine 399 are cytoplasmic. Residues lysine 288–lysine 399 enclose the SCP2 domain.

It belongs to the band 7/mec-2 family. In terms of assembly, interacts with STOM; may redistribute STOM from the plasma membrane to late endosomes. As to expression, expressed in dorsal root ganglion neurons.

The protein localises to the membrane. The protein resides in the cytoplasmic vesicle. Its subcellular location is the cell membrane. It is found in the late endosome membrane. It localises to the membrane raft. May play a role in cholesterol transfer to late endosomes. May play a role in modulating membrane acid-sensing ion channels. Can specifically inhibit proton-gated current of ASIC1 isoform 1. Can increase inactivation speed of ASIC3. May be involved in regulation of proton sensing in dorsal root ganglions. This chain is Stomatin-like protein 1 (Stoml1), found in Mus musculus (Mouse).